The following is a 579-amino-acid chain: Zinc finger protein 382 (579 aa).

Residues 1 to 12 (MGRPGRKPRGRA) are compositionally biased toward basic residues. The tract at residues 1–37 (MGRPGRKPRGRARPGLFPFPKEELRQGGSSPANLNAM) is disordered. The segment at 12–135 (ARPGLFPFPK…DKPPKSIVII (124 aa)) is mediates interaction with TRIM28. The segment covering 27 to 36 (GGSSPANLNA) has biased composition (polar residues). Represses transcription regions lie at residues 40-81 (GPVS…FISV) and 105-240 (IFPS…PEQR). The 72-residue stretch at 42–113 (VSFKDVTVDF…RIFPSQSYLE (72 aa)) folds into the KRAB domain. Residues 241-263 (FEYNKCDSSFLMTGVEFPHGRAH) form a C2H2-type 1; degenerate zinc finger. 9 C2H2-type zinc fingers span residues 325-347 (FQCPYCGNSFRRKSYLIEHERIH), 353-375 (YICCQCGRAFRQKTALTLHEKTH), 381-403 (YLCVDCGKSFRQKATLTRHHKAH), 409-431 (YECTQCGSAFGKKSYLIDHQRTH), 437-459 (YQCTECGKAFIQKTTLTVHQRTH), 465-487 (YICSECGKSFCQKTTLTLHQRIH), 493-515 (YICSDCGKSFRQKAILTVHYRIH), 521-543 (NGCPQCGKAFSRKSNLIRHQKIH), and 549-571 (YECQECGKFFSCKSNLITHQKTH). The interval 325 to 579 (FQCPYCGNSF…THKTETMRFQ (255 aa)) is required for transcriptional repression activity; probably mediates sequence-specific DNA-binding.

The protein belongs to the krueppel C2H2-type zinc-finger protein family. In terms of assembly, interacts with TRIM28; enhances the transcriptional repressor activity.

The protein resides in the nucleus. Functionally, functions as a sequence-specific transcriptional repressor. The protein is Zinc finger protein 382 (Znf382) of Mus musculus (Mouse).